The sequence spans 338 residues: MKFVDSASVFVQAGDGGRGCVSFRREKFVPKGGPDGGDGGRGGHVWLETNSHLTTLLDFKYKNKYIAERGVHGQGARKTGKDGVEVVIQVPCGTIVRNAATGEVIADLTEDAQKILIARGGRGGRGNQHFATSTHQAPRHAEPGQKGEEFTLDLELKLMADVGLVGFPNAGKSTLISVVSAARPKIADYPFTTLVPNLGIVRYDDYKSFVMADIPGIIEGAAEGRGLGLQFLRHIERTKVLAILIAVDSPDIEAEYQTILGELEKFSATLLQKPRIVVITKMDVTDEPLALQLAGEQTPIFAISAVAGQGLKELKDALWRIIVAERAVPTNQVPQGGE.

The 159-residue stretch at 1–159 (MKFVDSASVF…FTLDLELKLM (159 aa)) folds into the Obg domain. The segment at 123-145 (GGRGNQHFATSTHQAPRHAEPGQ) is disordered. The OBG-type G domain occupies 160–323 (ADVGLVGFPN…LKDALWRIIV (164 aa)). GTP is bound by residues 166–173 (GFPNAGKS), 191–195 (FTTLV), 213–216 (DIPG), 280–283 (TKMD), and 304–306 (SAV). 2 residues coordinate Mg(2+): Ser173 and Thr193.

This sequence belongs to the TRAFAC class OBG-HflX-like GTPase superfamily. OBG GTPase family. Monomer. Requires Mg(2+) as cofactor.

Its subcellular location is the cytoplasm. Functionally, an essential GTPase which binds GTP, GDP and possibly (p)ppGpp with moderate affinity, with high nucleotide exchange rates and a fairly low GTP hydrolysis rate. Plays a role in control of the cell cycle, stress response, ribosome biogenesis and in those bacteria that undergo differentiation, in morphogenesis control. In Chlorobium chlorochromatii (strain CaD3), this protein is GTPase Obg.